Consider the following 91-residue polypeptide: Probable Fe(2+)-trafficking protein (91 aa).

It belongs to the Fe(2+)-trafficking protein family.

Could be a mediator in iron transactions between iron acquisition and iron-requiring processes, such as synthesis and/or repair of Fe-S clusters in biosynthetic enzymes. The polypeptide is Probable Fe(2+)-trafficking protein (Cellvibrio japonicus (strain Ueda107) (Pseudomonas fluorescens subsp. cellulosa)).